The chain runs to 208 residues: Putative archaetidylserine decarboxylase proenzyme (208 aa).

The active-site Schiff-base intermediate with substrate; via pyruvic acid is S172. The residue at position 172 (S172) is a Pyruvic acid (Ser); by autocatalysis.

The protein belongs to the phosphatidylserine decarboxylase family. PSD-A subfamily. Heterodimer of a large membrane-associated beta subunit and a small pyruvoyl-containing alpha subunit. Pyruvate serves as cofactor. In terms of processing, is synthesized initially as an inactive proenzyme. Formation of the active enzyme involves a self-maturation process in which the active site pyruvoyl group is generated from an internal serine residue via an autocatalytic post-translational modification. Two non-identical subunits are generated from the proenzyme in this reaction, and the pyruvate is formed at the N-terminus of the alpha chain, which is derived from the carboxyl end of the proenzyme. The post-translation cleavage follows an unusual pathway, termed non-hydrolytic serinolysis, in which the side chain hydroxyl group of the serine supplies its oxygen atom to form the C-terminus of the beta chain, while the remainder of the serine residue undergoes an oxidative deamination to produce ammonia and the pyruvoyl prosthetic group on the alpha chain.

It is found in the cell membrane. The catalysed reaction is archaetidylserine + H(+) = archaetidylethanolamine + CO2. Its function is as follows. Catalyzes the formation of archaetidylethanolamine (PtdEtn) from archaetidylserine (PtdSer). The protein is Putative archaetidylserine decarboxylase proenzyme of Methanosarcina mazei (strain ATCC BAA-159 / DSM 3647 / Goe1 / Go1 / JCM 11833 / OCM 88) (Methanosarcina frisia).